The primary structure comprises 208 residues: Riboflavin synthase (208 aa).

2 Lumazine-binding repeats span residues 1–97 (MFTG…MGGH) and 98–195 (IISG…VDTT). 2,4-dihydroxypteridine contacts are provided by residues 4 to 6 (GIV), 48 to 50 (CLT), 62 to 67 (DIMKIT), 101 to 103 (GHI), Lys-137, 146 to 148 (SLT), and 160 to 165 (SIIPET).

Homotrimer.

The catalysed reaction is 2 6,7-dimethyl-8-(1-D-ribityl)lumazine + H(+) = 5-amino-6-(D-ribitylamino)uracil + riboflavin. Its pathway is cofactor biosynthesis; riboflavin biosynthesis; riboflavin from 2-hydroxy-3-oxobutyl phosphate and 5-amino-6-(D-ribitylamino)uracil: step 2/2. Its function is as follows. Catalyzes the dismutation of two molecules of 6,7-dimethyl-8-ribityllumazine, resulting in the formation of riboflavin and 5-amino-6-(D-ribitylamino)uracil. This is Riboflavin synthase (ribE) from Buchnera aphidicola subsp. Schizaphis graminum (strain Sg).